The primary structure comprises 218 residues: Adenylate kinase (218 aa).

10 to 15 (GAGKGT) is an ATP binding site. The interval 30 to 59 (STGDMLRAAVKAGSPLGLKVKDIMTSGGLV) is NMP. AMP is bound by residues T31, R36, 57–59 (GLV), 85–88 (GFPR), and Q92. Residues 122–159 (GRRVHEASGRVYHVKHNAPKTEGVDDETGEPLVQRDDD) form an LID region. ATP-binding positions include R123 and 132–133 (VY). AMP contacts are provided by R156 and R167. G203 lines the ATP pocket.

The protein belongs to the adenylate kinase family. Monomer.

The protein resides in the cytoplasm. It carries out the reaction AMP + ATP = 2 ADP. The protein operates within purine metabolism; AMP biosynthesis via salvage pathway; AMP from ADP: step 1/1. Functionally, catalyzes the reversible transfer of the terminal phosphate group between ATP and AMP. Plays an important role in cellular energy homeostasis and in adenine nucleotide metabolism. This Saccharophagus degradans (strain 2-40 / ATCC 43961 / DSM 17024) protein is Adenylate kinase.